Here is a 326-residue protein sequence, read N- to C-terminus: Malate dehydrogenase (326 aa).

11 to 17 (GAAGQIG) provides a ligand contact to NAD(+). The substrate site is built by Arg92 and Arg98. NAD(+)-binding positions include Asn105, Gln112, and 129–131 (VGN). Substrate contacts are provided by Asn131 and Arg162. Residue His187 is the Proton acceptor of the active site.

It belongs to the LDH/MDH superfamily. MDH type 2 family.

It carries out the reaction (S)-malate + NAD(+) = oxaloacetate + NADH + H(+). Functionally, catalyzes the reversible oxidation of malate to oxaloacetate. This is Malate dehydrogenase from Leptospira interrogans serogroup Icterohaemorrhagiae serovar Lai (strain 56601).